We begin with the raw amino-acid sequence, 351 residues long: Nicotinate-nucleotide--dimethylbenzimidazole phosphoribosyltransferase (351 aa).

The Proton acceptor role is filled by Glu-317.

The protein belongs to the CobT family.

The enzyme catalyses 5,6-dimethylbenzimidazole + nicotinate beta-D-ribonucleotide = alpha-ribazole 5'-phosphate + nicotinate + H(+). The protein operates within nucleoside biosynthesis; alpha-ribazole biosynthesis; alpha-ribazole from 5,6-dimethylbenzimidazole: step 1/2. In terms of biological role, catalyzes the synthesis of alpha-ribazole-5'-phosphate from nicotinate mononucleotide (NAMN) and 5,6-dimethylbenzimidazole (DMB). The protein is Nicotinate-nucleotide--dimethylbenzimidazole phosphoribosyltransferase of Ectopseudomonas mendocina (strain ymp) (Pseudomonas mendocina).